Here is a 589-residue protein sequence, read N- to C-terminus: MATRTHASNELSETLQGEKVVLKGWVQRRRDLGGLIFIDLRDRTGITQVVFSPDVAEAHALADKVRSEYVIEIEGTVILRTEDQINPNVPNGKIEVEATRLVVINTAKTTPFQIEDRTDVSEDLRLKYRYLDLRRPVMFDTFKMRSDVTRTIRNFLQNEGFLEVETPILTKSTPEGARDYLVPSRVHEGEFYALPQSPQLFKQLLMVAGFEKYFQIARCFRDEDLRADRQPEFTQVDIETSFLTQEEVLEMNERLIQAVMKEVKGIDIPAPFQRMKYQEAMDRYGSDKPDVRFGLELVALNDVFEGCGFKVFADTVAQGKQVKSINIKGAADKYSRKDMDELTKFVGIYGAKGLAWLKVTEEGLNGPIAKFFDEALAAALIERMGAEVGDILVFVADKASVVAASLGALRTKLGQDLDLIDESQFAFLWITDWPLFEYSEEDGRYYAAHHPFTRPFDEDIPLMDTDPSAVRAQAYDIVLNGYELGGGSLRIYERDLQEKMFELLGFSEEEAQAQFGFLLEAFEYGVPPHAGLAFGLDRFVMLLAGRHNLRDTIAFPKTASASCLMTEAPSEVSPEQLSELSLAIKPFRK.

Glu175 serves as a coordination point for L-aspartate. Residues 199 to 202 are aspartate; sequence QLFK. An L-aspartate-binding site is contributed by Arg221. ATP contacts are provided by residues 221-223 and Gln230; that span reads RDE. His449 contacts L-aspartate. Glu483 serves as a coordination point for ATP. Arg490 contributes to the L-aspartate binding site. 535–538 provides a ligand contact to ATP; sequence GLDR.

Belongs to the class-II aminoacyl-tRNA synthetase family. Type 1 subfamily. In terms of assembly, homodimer.

It is found in the cytoplasm. It carries out the reaction tRNA(Asp) + L-aspartate + ATP = L-aspartyl-tRNA(Asp) + AMP + diphosphate. Functionally, catalyzes the attachment of L-aspartate to tRNA(Asp) in a two-step reaction: L-aspartate is first activated by ATP to form Asp-AMP and then transferred to the acceptor end of tRNA(Asp). This is Aspartate--tRNA ligase from Lysinibacillus sphaericus (strain C3-41).